The sequence spans 513 residues: GMP synthase [glutamine-hydrolyzing] (513 aa).

Residues 9–198 (LILVLDFGSQ…VRRVCDCRGQ (190 aa)) enclose the Glutamine amidotransferase type-1 domain. Cys-86 functions as the Nucleophile in the catalytic mechanism. Active-site residues include His-172 and Glu-174. Residues 199-388 (WTMENFIEIE…LGIPEHLVWR (190 aa)) form the GMPS ATP-PPase domain. Residue 226–232 (SGGVDSS) coordinates ATP.

As to quaternary structure, homodimer.

The catalysed reaction is XMP + L-glutamine + ATP + H2O = GMP + L-glutamate + AMP + diphosphate + 2 H(+). The protein operates within purine metabolism; GMP biosynthesis; GMP from XMP (L-Gln route): step 1/1. Functionally, catalyzes the synthesis of GMP from XMP. The sequence is that of GMP synthase [glutamine-hydrolyzing] from Staphylococcus aureus (strain USA300).